The sequence spans 295 residues: DegV domain-containing protein MG326 (295 aa).

In terms of domain architecture, DegV spans 4–292; sequence TAIITDSTAS…IDAFSISLLI (289 aa). Hexadecanoate is bound by residues T63 and S95.

Its function is as follows. May bind long-chain fatty acids, such as palmitate, and may play a role in lipid transport or fatty acid metabolism. This Mycoplasma genitalium (strain ATCC 33530 / DSM 19775 / NCTC 10195 / G37) (Mycoplasmoides genitalium) protein is DegV domain-containing protein MG326.